We begin with the raw amino-acid sequence, 101 residues long: Integration host factor subunit beta (101 aa).

Residues 57-77 are disordered; it reads PARAGRNPRTGAHVPVDQKSV.

Belongs to the bacterial histone-like protein family. Heterodimer of an alpha and a beta chain.

Functionally, this protein is one of the two subunits of integration host factor, a specific DNA-binding protein that functions in genetic recombination as well as in transcriptional and translational control. The chain is Integration host factor subunit beta from Rhodopseudomonas palustris (strain HaA2).